The chain runs to 692 residues: Transforming growth factor beta activator LRRC33 (692 aa).

The first 24 residues, methionine 1–glycine 24, serve as a signal peptide directing secretion. At threonine 25–leucine 650 the chain is on the extracellular side. The LRRNT domain occupies alanine 29–proline 56. LRR repeat units lie at residues histidine 58–alanine 79, arginine 82–glutamate 103, histidine 106–alanine 127, arginine 133–asparagine 155, serine 158–glycine 179, arginine 182–glycine 203, glutamate 206–glutamine 227, leucine 228–glutamate 239, glutamate 251–glycine 272, and lysine 273–serine 294. Asparagine 74 is a glycosylation site (N-linked (GlcNAc...) asparagine). Asparagine 155 carries N-linked (GlcNAc...) asparagine glycosylation. An N-linked (GlcNAc...) asparagine glycan is attached at asparagine 232. 3 N-linked (GlcNAc...) asparagine glycosylation sites follow: asparagine 292, asparagine 309, and asparagine 312. 11 LRR repeats span residues alanine 329–lysine 350, serine 353–proline 374, alanine 377–threonine 398, asparagine 403–serine 424, serine 427–aspartate 448, serine 463–glycine 484, serine 486–serine 507, threonine 512–serine 533, asparagine 537–serine 558, alanine 559–glutamate 580, and glycine 585–glycine 605. Asparagine 408 carries N-linked (GlcNAc...) asparagine glycosylation. An N-linked (GlcNAc...) asparagine glycan is attached at asparagine 500. The 38-residue stretch at alanine 606–tryptophan 643 folds into the LRRCT domain. N-linked (GlcNAc...) asparagine glycosylation is present at asparagine 622. Residues phenylalanine 651 to phenylalanine 671 traverse the membrane as a helical segment. At leucine 672–tyrosine 692 the chain is on the cytoplasmic side.

This sequence belongs to the LRRC32/LRRC33 family. Interacts (via LRR repeats) with TLR2, TLR3, TLR4, TLR9 and probably other Toll-like receptors. Interacts with CYBB/NOX2; the interaction is direct. Interacts with TGFB1; associates via disulfide bonds with the Latency-associated peptide chain (LAP) regulatory chain of TGFB1, leading to regulate activation of TGF-beta-1.

The protein resides in the cell membrane. Its subcellular location is the endoplasmic reticulum membrane. Key regulator of transforming growth factor beta-1 (TGFB1) specifically required for microglia function in the nervous system. Required for activation of latent TGF-beta-1 in macrophages and microglia: associates specifically via disulfide bonds with the Latency-associated peptide (LAP), which is the regulatory chain of TGFB1, and regulates integrin-dependent activation of TGF-beta-1. TGF-beta-1 activation mediated by LRRC33/NRROS is highly localized: there is little spreading of TGF-beta-1 activated from one microglial cell to neighboring microglia, suggesting the existence of localized and selective activation of TGF-beta-1 by LRRC33/NRROS. Indirectly plays a role in Toll-like receptor (TLR) signaling: ability to inhibit TLR-mediated NF-kappa-B activation and cytokine production is probably a consequence of its role in TGF-beta-1 signaling. In Rattus norvegicus (Rat), this protein is Transforming growth factor beta activator LRRC33.